The primary structure comprises 536 residues: Membrane protein insertase YidC (536 aa).

The next 5 helical transmembrane spans lie at 3–23, 346–366, 417–437, 454–474, and 494–514; these read LQRN…WKTW, ICGN…GITF, GGCF…YMLI, LSDQ…MFFI, and IPIL…LYYL.

Belongs to the OXA1/ALB3/YidC family. Type 1 subfamily. Interacts with the Sec translocase complex via SecD. Specifically interacts with transmembrane segments of nascent integral membrane proteins during membrane integration.

The protein resides in the cell membrane. Required for the insertion and/or proper folding and/or complex formation of integral membrane proteins into the membrane. Involved in integration of membrane proteins that insert both dependently and independently of the Sec translocase complex, as well as at least some lipoproteins. Aids folding of multispanning membrane proteins. The protein is Membrane protein insertase YidC of Buchnera aphidicola subsp. Baizongia pistaciae (strain Bp).